Consider the following 375-residue polypeptide: Period circadian protein (375 aa).

Disordered stretches follow at residues 28 to 118 (TAPV…AVTP), 140 to 189 (KHRE…WEGE), and 220 to 254 (CQAS…NQYA). The span at 69-91 (SGNFTTGSNLHMSSVTNTSNAGT) shows a compositional bias: low complexity. The span at 92-113 (GTSGTGNSGGGGGGGGGGGPGN) shows a compositional bias: gly residues. Residues 145–156 (RGRSGEKNKKSA) show a composition bias toward basic and acidic residues. The span at 224 to 243 (GAGGGGSGSVGGTGNIGSGG) shows a compositional bias: gly residues. Over residues 245-254 (NAQPSTNQYA) the composition is skewed to polar residues.

In terms of assembly, forms a heterodimer with timeless (TIM); the complex then translocates into the nucleus. Phosphorylated with a circadian rhythmicity, probably by the double-time protein (dbt). Phosphorylation could be implicated in the stability of per monomer and in the formation of heterodimer per-tim.

It is found in the nucleus. The protein localises to the cytoplasm. The protein resides in the perinuclear region. Essential for biological clock functions. Determines the period length of circadian and ultradian rhythms; an increase in PER dosage leads to shortened circadian rhythms and a decrease leads to lengthened circadian rhythms. Essential for the circadian rhythmicity of locomotor activity, eclosion behavior, and for the rhythmic component of the male courtship song that originates in the thoracic nervous system. The biological cycle depends on the rhythmic formation and nuclear localization of the TIM-PER complex. Light induces the degradation of TIM, which promotes elimination of PER. Nuclear activity of the heterodimer coordinatively regulates PER and TIM transcription through a negative feedback loop. Behaves as a negative element in circadian transcriptional loop. Does not appear to bind DNA, suggesting indirect transcriptional inhibition. The sequence is that of Period circadian protein (per) from Drosophila capricorni (Fruit fly).